We begin with the raw amino-acid sequence, 436 residues long: Protein GOLM2 (436 aa).

An N-acetylmethionine modification is found at Met1. Over Met1–Pro14 the chain is Cytoplasmic. Residues Ser15 to Ile35 form a helical; Signal-anchor for type II membrane protein membrane-spanning segment. A coiled-coil region spans residues Ile35 to Ile198. Residues Ser36–Leu436 lie on the Lumenal side of the membrane. Basic and acidic residues predominate over residues Ala225–Gly247. The interval Ala225 to Leu436 is disordered. Residues Ser233 and Ser275 each carry the phosphoserine modification. Residues Asn305–Leu321 show a composition bias toward polar residues. 2 positions are modified to phosphoserine: Ser328 and Ser332. A compositionally biased stretch (basic and acidic residues) spans Ala344–Asp362. The residue at position 366 (Ser366) is a Phosphoserine. A compositionally biased stretch (acidic residues) spans Tyr399–Arg418. The span at Asp426–Leu436 shows a compositional bias: basic and acidic residues.

The protein belongs to the GOLM family.

It localises to the membrane. The chain is Protein GOLM2 from Homo sapiens (Human).